Here is a 174-residue protein sequence, read N- to C-terminus: RNA pyrophosphohydrolase (174 aa).

Residues 6 to 149 (GYRPNVGIIL…KRDVYLGALK (144 aa)) form the Nudix hydrolase domain. Residues 38–59 (GGIKPGESPETAMYRELYEEVG) carry the Nudix box motif.

Belongs to the Nudix hydrolase family. RppH subfamily. A divalent metal cation is required as a cofactor.

Functionally, accelerates the degradation of transcripts by removing pyrophosphate from the 5'-end of triphosphorylated RNA, leading to a more labile monophosphorylated state that can stimulate subsequent ribonuclease cleavage. This is RNA pyrophosphohydrolase from Neisseria meningitidis serogroup C (strain 053442).